The sequence spans 420 residues: Transcription termination factor Rho (420 aa).

Positions 49–124 (DIFGGGVLEI…LKVDQVNDDK (76 aa)) constitute a Rho RNA-BD domain. ATP is bound by residues 170 to 175 (GKGQRG), 182 to 187 (KAGKTM), and R213.

This sequence belongs to the Rho family. As to quaternary structure, homohexamer. The homohexamer assembles into an open ring structure.

Its function is as follows. Facilitates transcription termination by a mechanism that involves Rho binding to the nascent RNA, activation of Rho's RNA-dependent ATPase activity, and release of the mRNA from the DNA template. The chain is Transcription termination factor Rho from Haemophilus influenzae (strain ATCC 51907 / DSM 11121 / KW20 / Rd).